A 189-amino-acid chain; its full sequence is Ribosome maturation factor RimM (189 aa).

Residues 1-16 are compositionally biased toward polar residues; that stretch reads MAPSCPTRSRVWSSRT. Residues 1 to 21 form a disordered region; that stretch reads MAPSCPTRSRVWSSRTSPPPD. The PRC barrel domain occupies 118–189; that stretch reads ENEFYWSDLI…TVEVDWGEDY (72 aa).

The protein belongs to the RimM family. Binds ribosomal protein uS19.

The protein localises to the cytoplasm. Its function is as follows. An accessory protein needed during the final step in the assembly of 30S ribosomal subunit, possibly for assembly of the head region. Essential for efficient processing of 16S rRNA. May be needed both before and after RbfA during the maturation of 16S rRNA. It has affinity for free ribosomal 30S subunits but not for 70S ribosomes. This chain is Ribosome maturation factor RimM, found in Thiobacillus denitrificans (strain ATCC 25259 / T1).